A 56-amino-acid chain; its full sequence is uncharacterized protein (56 aa).

This is an uncharacterized protein from Streptomyces lividans.